The chain runs to 124 residues: Fluoride-specific ion channel FluC (124 aa).

4 helical membrane-spanning segments follow: residues 4–24, 35–55, 62–82, and 102–122; these read LIFV…ISIF, FGTL…YALG, PEIK…FSTF, and IALN…LVFS. 2 residues coordinate Na(+): G74 and T77.

Belongs to the fluoride channel Fluc/FEX (TC 1.A.43) family.

The protein localises to the cell inner membrane. It carries out the reaction fluoride(in) = fluoride(out). With respect to regulation, na(+) is not transported, but it plays an essential structural role and its presence is essential for fluoride channel function. Fluoride-specific ion channel. Important for reducing fluoride concentration in the cell, thus reducing its toxicity. This is Fluoride-specific ion channel FluC from Shewanella loihica (strain ATCC BAA-1088 / PV-4).